We begin with the raw amino-acid sequence, 560 residues long: Serine palmitoyltransferase 2 (560 aa).

Residues 65-85 traverse the membrane as a helical segment; that stretch reads PMLVAVLTYVGYGVLTLFGYL. Lys-377 is modified (N6-(pyridoxal phosphate)lysine).

Belongs to the class-II pyridoxal-phosphate-dependent aminotransferase family. As to quaternary structure, component of the serine palmitoyltransferase (SPT) complex, which is composed of SPTLC1, SPTLC2 or SPTLC3 and SPTSSA or SPTSSB. The heterodimer consisting of SPTLC1 and SPTLC2/SPTLC3 forms the catalytic core of the enzyme, while SPTSSA or SPTSSB subunits determine substrate specificity. SPT also interacts with ORMDL proteins, especially ORMDL3, which negatively regulate SPT activity in the presence of ceramides. Forms dimers of heterodimers with SPTLC1. Pyridoxal 5'-phosphate serves as cofactor. As to expression, expressed in a variety of tissues. Expressed in brains cortices (at protein level). Expressed in brown and white adipose tissues. Expressed in liver.

Its subcellular location is the endoplasmic reticulum membrane. It catalyses the reaction L-serine + hexadecanoyl-CoA + H(+) = 3-oxosphinganine + CO2 + CoA. The catalysed reaction is octadecanoyl-CoA + L-serine + H(+) = 3-oxoeicosasphinganine + CO2 + CoA. The protein operates within lipid metabolism; sphingolipid metabolism. SPT complex catalytic activity is negatively regulated by ORMDL proteins, including ORMDL3, in the presence of ceramides. This mechanism allows to maintain ceramide levels at sufficient concentrations for the production of complex sphingolipids, but which prevents the accumulation of ceramides to levels that trigger apoptosis. In terms of biological role, component of the serine palmitoyltransferase multisubunit enzyme (SPT) that catalyzes the initial and rate-limiting step in sphingolipid biosynthesis by condensing L-serine and activated acyl-CoA (most commonly palmitoyl-CoA) to form long-chain bases. The SPT complex is composed of SPTLC1, SPTLC2 or SPTLC3 and SPTSSA or SPTSSB. Within this complex, the heterodimer consisting of SPTLC1 and SPTLC2/SPTLC3 forms the catalytic core. The composition of the serine palmitoyltransferase (SPT) complex determines the substrate preference. The SPTLC1-SPTLC2-SPTSSA complex shows a strong preference for C16-CoA substrate, while the SPTLC1-SPTLC3-SPTSSA isozyme uses both C14-CoA and C16-CoA as substrates, with a slight preference for C14-CoA. The SPTLC1-SPTLC2-SPTSSB complex shows a strong preference for C18-CoA substrate, while the SPTLC1-SPTLC3-SPTSSB isozyme displays an ability to use a broader range of acyl-CoAs, without apparent preference. Crucial for adipogenesis. The polypeptide is Serine palmitoyltransferase 2 (Mus musculus (Mouse)).